Consider the following 132-residue polypeptide: ATP synthase epsilon chain (132 aa).

This sequence belongs to the ATPase epsilon chain family. F-type ATPases have 2 components, CF(1) - the catalytic core - and CF(0) - the membrane proton channel. CF(1) has five subunits: alpha(3), beta(3), gamma(1), delta(1), epsilon(1). CF(0) has three main subunits: a, b and c.

It is found in the cell inner membrane. In terms of biological role, produces ATP from ADP in the presence of a proton gradient across the membrane. The polypeptide is ATP synthase epsilon chain (Anaeromyxobacter sp. (strain Fw109-5)).